We begin with the raw amino-acid sequence, 126 residues long: Fatty acid-binding protein 1, liver (126 aa).

Belongs to the calycin superfamily. Fatty-acid binding protein (FABP) family.

Its subcellular location is the cytoplasm. Functionally, binds free fatty acids and their coenzyme A derivatives, bilirubin, and some other small molecules in the cytoplasm. May be involved in intracellular lipid transport. The specificity of axolotl L-FABP differs from that of LB-FABP. The polypeptide is Fatty acid-binding protein 1, liver (Ambystoma mexicanum (Axolotl)).